A 660-amino-acid polypeptide reads, in one-letter code: ATPase WRNIP1 (660 aa).

Residues 17 to 44 (QVQCPVCQQMMPAAHINSHLDRCLLLHP) form a UBZ4-type zinc finger. Positions 20, 23, 31, 35, and 39 each coordinate Zn(2+). A disordered region spans residues 50–191 (PAAGPHRAGE…DDPGHWDADA (142 aa)). S65 and S75 each carry phosphoserine. The segment covering 76–89 (ESSALKQPATPTAA) has biased composition (polar residues). K81 participates in a covalent cross-link: Glycyl lysine isopeptide (Lys-Gly) (interchain with G-Cter in ubiquitin). Phosphothreonine is present on T85. S91 and S92 each carry phosphoserine. Over residues 92–104 (SEGEGEEGDDGGE) the composition is skewed to acidic residues. T116 is modified (phosphothreonine). Over residues 135–155 (ARKGLGKRPAAAAAAGSASPR) the composition is skewed to low complexity. K141 is covalently cross-linked (Glycyl lysine isopeptide (Lys-Gly) (interchain with G-Cter in ubiquitin)). The residue at position 153 (S153) is a Phosphoserine. A compositionally biased stretch (acidic residues) spans 159–182 (ETEAQEEEEAGVDGDGDADVDGED). A Glycyl lysine isopeptide (Lys-Gly) (interchain with G-Cter in ubiquitin) cross-link involves residue K220. 265 to 271 (PGCGKTT) is a binding site for ATP. Glycyl lysine isopeptide (Lys-Gly) (interchain with G-Cter in ubiquitin) cross-links involve residues K296, K305, K311, K317, and K330. Residue K477 forms a Glycyl lysine isopeptide (Lys-Gly) (interchain with G-Cter in SUMO2); alternate linkage. Residue K477 forms a Glycyl lysine isopeptide (Lys-Gly) (interchain with G-Cter in ubiquitin); alternate linkage. Phosphotyrosine occurs at positions 529 and 557. A Glycyl lysine isopeptide (Lys-Gly) (interchain with G-Cter in ubiquitin) cross-link involves residue K622. Residue K628 forms a Glycyl lysine isopeptide (Lys-Gly) (interchain with G-Cter in ubiquitin); alternate linkage. The residue at position 628 (K628) is an N6-acetyllysine; alternate. K631 participates in a covalent cross-link: Glycyl lysine isopeptide (Lys-Gly) (interchain with G-Cter in ubiquitin).

Belongs to the AAA ATPase family. RarA/MGS1/WRNIP1 subfamily. Forms homooligomers, possibly octamers. Directly interacts with POLD1, POLD2 and POLD4. Interacts with the N-terminal domain of WRN. Interacts (via UBZ4-type zinc finger) with monoubiquitin and polyubiquitin. Interacts with TRIM14 and PPP6C; these interactions positively regulate the RIGI signaling pathway. Post-translationally, sumoylated with SUMO1 and SUMO2/3. As to expression, ubiquitously expressed.

The protein resides in the nucleus. The protein localises to the cytoplasm. It catalyses the reaction ATP + H2O = ADP + phosphate + H(+). In terms of biological role, functions as a modulator of initiation or reinitiation events during DNA polymerase delta-mediated DNA synthesis. In the presence of ATP, stimulation of DNA polymerase delta-mediated DNA synthesis is decreased. Also plays a role in the innate immune defense against viruses. Stabilizes the RIGI dsRNA interaction and promotes RIGI 'Lys-63'-linked polyubiquitination. In turn, RIGI transmits the signal through mitochondrial MAVS. The chain is ATPase WRNIP1 from Rattus norvegicus (Rat).